A 161-amino-acid chain; its full sequence is ATP synthase subunit b 2 (161 aa).

Residues I13–P33 form a helical membrane-spanning segment.

It belongs to the ATPase B chain family. As to quaternary structure, F-type ATPases have 2 components, F(1) - the catalytic core - and F(0) - the membrane proton channel. F(1) has five subunits: alpha(3), beta(3), gamma(1), delta(1), epsilon(1). F(0) has three main subunits: a(1), b(2) and c(10-14). The alpha and beta chains form an alternating ring which encloses part of the gamma chain. F(1) is attached to F(0) by a central stalk formed by the gamma and epsilon chains, while a peripheral stalk is formed by the delta and b chains.

It localises to the cell inner membrane. Functionally, f(1)F(0) ATP synthase produces ATP from ADP in the presence of a proton or sodium gradient. F-type ATPases consist of two structural domains, F(1) containing the extramembraneous catalytic core and F(0) containing the membrane proton channel, linked together by a central stalk and a peripheral stalk. During catalysis, ATP synthesis in the catalytic domain of F(1) is coupled via a rotary mechanism of the central stalk subunits to proton translocation. In terms of biological role, component of the F(0) channel, it forms part of the peripheral stalk, linking F(1) to F(0). The b'-subunit is a diverged and duplicated form of b found in plants and photosynthetic bacteria. The protein is ATP synthase subunit b 2 (atpF2) of Rhodospirillum rubrum (strain ATCC 11170 / ATH 1.1.1 / DSM 467 / LMG 4362 / NCIMB 8255 / S1).